The chain runs to 397 residues: Pentatricopeptide repeat-containing protein At1g80150, mitochondrial (397 aa).

The transit peptide at 1–81 directs the protein to the mitochondrion; the sequence is MLSLRHIRRF…FAFEDTVSRL (81 aa). PPR repeat units lie at residues 105–139, 140–170, 176–210, 211–245, 246–280, 281–315, 316–350, and 351–381; these read REGF…GCKR, SVKS…APSK, DAVS…GLTP, DVVT…GCKP, NLTT…QVEP, DSIT…GYKP, NLKI…KWYP, and NLDT…VHRR.

The protein belongs to the PPR family. P subfamily.

It localises to the mitochondrion. The protein is Pentatricopeptide repeat-containing protein At1g80150, mitochondrial of Arabidopsis thaliana (Mouse-ear cress).